Reading from the N-terminus, the 676-residue chain is MIDQYKHQQLQIGLVSPQQIKAWANKNLPNGEVVGEVTRPSTFHYKTDKPEKDGLFCERIFGPIKSGICACGNSRASGAENEDERFCQKCGVEFVDSRIRRYQMGYIKLACPVTHVWYLKGLPSYIANLLDKPLKKLEGLVYGDFSFARPSTKKPTFLRLRGLFEEEIASCNHSISPFFSTPGFATFRNREIATGAGAIREQLADLDLRIIIENSLVEWKELEDEGYSGDEWEDRKRRIRKVFLIRRMQLAKHFIQTNVEPEWMVLCLLPVLPPELRPIVYRSGDKVVTSDINELYKRVIRRNNNLAYLLKRSELAPADLVMCQEKLVQEAVDTLLDSGSRGQPMRDGHNKVYKSLSDVIEGKEGRFRETLLGKRVDYSGRSVIVVGPSLSLHQCGLPLEIAIKLFQLFVIRDLITKRATSNVRIAKRKIWEKEPIVWEILQEVMRGHPVLLNRAPTLHRLGIQAFQPTLVEGRTISLHPLVCKGFNADFDGDQMAVHLPLSLEAQAEARLLMFSHMNLLSPAIGDPICVPTQDMLIGLYVLTIGNRRGICANRYNSCVNYPTKKVNYNMKDKEPHFSSSYDALGAYRQKLISLDSPLWLRWKLDQRVIGSREVPIEVQYESLGTYHEIYAHYLIVGNRKKEIRSIYIRTTLGHISFYRELEEAIQGFSQAYSYTI.

Positions 69, 71, 87, and 90 each coordinate Zn(2+). Mg(2+) is bound by residues Asp-489, Asp-491, and Asp-493.

The protein belongs to the RNA polymerase beta' chain family. RpoC1 subfamily. In plastids the minimal PEP RNA polymerase catalytic core is composed of four subunits: alpha, beta, beta', and beta''. When a (nuclear-encoded) sigma factor is associated with the core the holoenzyme is formed, which can initiate transcription. Mg(2+) serves as cofactor. Requires Zn(2+) as cofactor.

It is found in the plastid. Its subcellular location is the chloroplast. It carries out the reaction RNA(n) + a ribonucleoside 5'-triphosphate = RNA(n+1) + diphosphate. DNA-dependent RNA polymerase catalyzes the transcription of DNA into RNA using the four ribonucleoside triphosphates as substrates. In Lolium perenne (Perennial ryegrass), this protein is DNA-directed RNA polymerase subunit beta'.